A 219-amino-acid chain; its full sequence is Thiamine-phosphate synthase (219 aa).

4-amino-2-methyl-5-(diphosphooxymethyl)pyrimidine-binding positions include 44-48 (QFREK) and Asn79. Mg(2+) is bound by residues Asp80 and Asp99. Ser117 serves as a coordination point for 4-amino-2-methyl-5-(diphosphooxymethyl)pyrimidine. Residue 143-145 (TST) coordinates 2-[(2R,5Z)-2-carboxy-4-methylthiazol-5(2H)-ylidene]ethyl phosphate. Lys146 contacts 4-amino-2-methyl-5-(diphosphooxymethyl)pyrimidine. 2-[(2R,5Z)-2-carboxy-4-methylthiazol-5(2H)-ylidene]ethyl phosphate-binding positions include Gly175 and 195–196 (IS).

This sequence belongs to the thiamine-phosphate synthase family. The cofactor is Mg(2+).

It carries out the reaction 2-[(2R,5Z)-2-carboxy-4-methylthiazol-5(2H)-ylidene]ethyl phosphate + 4-amino-2-methyl-5-(diphosphooxymethyl)pyrimidine + 2 H(+) = thiamine phosphate + CO2 + diphosphate. The catalysed reaction is 2-(2-carboxy-4-methylthiazol-5-yl)ethyl phosphate + 4-amino-2-methyl-5-(diphosphooxymethyl)pyrimidine + 2 H(+) = thiamine phosphate + CO2 + diphosphate. The enzyme catalyses 4-methyl-5-(2-phosphooxyethyl)-thiazole + 4-amino-2-methyl-5-(diphosphooxymethyl)pyrimidine + H(+) = thiamine phosphate + diphosphate. It participates in cofactor biosynthesis; thiamine diphosphate biosynthesis; thiamine phosphate from 4-amino-2-methyl-5-diphosphomethylpyrimidine and 4-methyl-5-(2-phosphoethyl)-thiazole: step 1/1. Condenses 4-methyl-5-(beta-hydroxyethyl)thiazole monophosphate (THZ-P) and 2-methyl-4-amino-5-hydroxymethyl pyrimidine pyrophosphate (HMP-PP) to form thiamine monophosphate (TMP). This is Thiamine-phosphate synthase from Bacillus anthracis (strain A0248).